The primary structure comprises 138 residues: Large-conductance mechanosensitive channel (138 aa).

Transmembrane regions (helical) follow at residues 10–30 (FAMR…AAFG) and 76–96 (GSFI…FLAI).

This sequence belongs to the MscL family. Homopentamer.

It localises to the cell inner membrane. Its function is as follows. Channel that opens in response to stretch forces in the membrane lipid bilayer. May participate in the regulation of osmotic pressure changes within the cell. This Serratia proteamaculans (strain 568) protein is Large-conductance mechanosensitive channel.